Reading from the N-terminus, the 862-residue chain is AP-1 complex subunit gamma-2 (862 aa).

HEAT repeat units lie at residues M1 to A28, V29 to P65, E101 to E136, M137 to D173, G308 to Q345, A346 to V382, P384 to P417, E418 to D454, Y458 to G496, T507 to S545, and S560 to S599. One can recognise a GAE domain in the interval A744–P859.

The protein belongs to the adaptor complexes large subunit family. Adaptor protein complex 1 (AP-1) is a heterotetramer composed of two large adaptins (gamma-type subunit and beta-type subunit), a medium adaptin (mu-type subunit) and a small adaptin (sigma-type subunit).

The protein localises to the golgi apparatus. It is found in the cytoplasmic vesicle. The protein resides in the clathrin-coated vesicle membrane. Its function is as follows. Subunit of clathrin-associated adaptor protein complex 1 that plays a role in protein sorting at the trans-Golgi network and early endosomes (TGN/EE). The AP complexes mediate both the recruitment of clathrin to membranes and the recognition of sorting signals within the cytosolic tails of transmembrane cargo molecules. This is AP-1 complex subunit gamma-2 from Arabidopsis thaliana (Mouse-ear cress).